The chain runs to 306 residues: tRNA dimethylallyltransferase (306 aa).

An ATP-binding site is contributed by 14 to 21; it reads GPTAAGKS. 16 to 21 is a substrate binding site; that stretch reads TAAGKS. Residues 39–42 are interaction with substrate tRNA; sequence DSRL.

Belongs to the IPP transferase family. As to quaternary structure, monomer. Requires Mg(2+) as cofactor.

The enzyme catalyses adenosine(37) in tRNA + dimethylallyl diphosphate = N(6)-dimethylallyladenosine(37) in tRNA + diphosphate. Functionally, catalyzes the transfer of a dimethylallyl group onto the adenine at position 37 in tRNAs that read codons beginning with uridine, leading to the formation of N6-(dimethylallyl)adenosine (i(6)A). This chain is tRNA dimethylallyltransferase, found in Synechococcus elongatus (strain ATCC 33912 / PCC 7942 / FACHB-805) (Anacystis nidulans R2).